Here is a 295-residue protein sequence, read N- to C-terminus: NAD kinase (295 aa).

Aspartate 73 (proton acceptor) is an active-site residue. NAD(+) contacts are provided by residues 73 to 74 (DG), arginine 78, 146 to 147 (NE), lysine 157, arginine 174, aspartate 176, and 187 to 192 (TAYSLS).

Belongs to the NAD kinase family. It depends on a divalent metal cation as a cofactor.

It is found in the cytoplasm. It carries out the reaction NAD(+) + ATP = ADP + NADP(+) + H(+). Functionally, involved in the regulation of the intracellular balance of NAD and NADP, and is a key enzyme in the biosynthesis of NADP. Catalyzes specifically the phosphorylation on 2'-hydroxyl of the adenosine moiety of NAD to yield NADP. In Wigglesworthia glossinidia brevipalpis, this protein is NAD kinase.